The chain runs to 418 residues: D-amino acid dehydrogenase 1 (418 aa).

3 to 17 (IMVLGGGVIGVTTAY) contributes to the FAD binding site.

The protein belongs to the DadA oxidoreductase family. FAD serves as cofactor.

It carries out the reaction a D-alpha-amino acid + A + H2O = a 2-oxocarboxylate + AH2 + NH4(+). The protein operates within amino-acid degradation; D-alanine degradation; NH(3) and pyruvate from D-alanine: step 1/1. In terms of biological role, oxidative deamination of D-amino acids. This Mesorhizobium japonicum (strain LMG 29417 / CECT 9101 / MAFF 303099) (Mesorhizobium loti (strain MAFF 303099)) protein is D-amino acid dehydrogenase 1 (dadA1).